The primary structure comprises 412 residues: Argininosuccinate synthase (412 aa).

ATP is bound by residues 12 to 20 (AYSGGLDTS) and Ala-39. Positions 91 and 96 each coordinate L-citrulline. Residue Gly-121 participates in ATP binding. The L-aspartate site is built by Thr-123, Asn-127, and Asp-128. Asn-127 provides a ligand contact to L-citrulline. L-citrulline is bound by residues Arg-131, Ser-180, Ser-189, Glu-265, and Tyr-277.

It belongs to the argininosuccinate synthase family. Type 1 subfamily. In terms of assembly, homotetramer.

The protein resides in the cytoplasm. It carries out the reaction L-citrulline + L-aspartate + ATP = 2-(N(omega)-L-arginino)succinate + AMP + diphosphate + H(+). The protein operates within amino-acid biosynthesis; L-arginine biosynthesis; L-arginine from L-ornithine and carbamoyl phosphate: step 2/3. The chain is Argininosuccinate synthase from Pseudoalteromonas atlantica (strain T6c / ATCC BAA-1087).